The primary structure comprises 349 residues: Insulin gene enhancer protein ISL-1 (349 aa).

LIM zinc-binding domains lie at 17–70 (CVGC…CKRD) and 79–133 (CAKC…RADH). The homeobox DNA-binding region spans 181–240 (TTRVRTVLNEKQLHTLRTCYAANPRPDALMKEQLVEMTGLSPRVIRVWFQNKRCKDKKRS). An LIM-binding domain (LID) region spans residues 262-291 (GTPMVAASPERHDGGLQANPVEVQSYQPPW). Positions 312-349 (VNFSEGGPGSNSTGSEVASMSSQLPDTPNSMVASPIEA) are disordered. Residues 321–343 (SNSTGSEVASMSSQLPDTPNSMV) show a composition bias toward polar residues.

As to quaternary structure, at neuronal promoters, displaces LDB1 from LHX3 LIM domain to form a ternary complex in which ISL1 contacts both LHX3 and LDB1; allosteric structural changes in the DNA binding domain of LHX3, induced by the ISL1:LHX3 interaction, may explain differences in sequence specificity of the different complexes. Interacts with LHX3. Interacts (via C-terminus) with POU4F2 (via C-terminus) isoform 1. Interacts with POU3F2. Interacts with POU4F3. Interacts (via N-terminal domain) with MLIP; the interaction represses ISL1 transactivator activity. Interacts with GCN5/KAT2A. Interactions of ISL1 with MLIP1 or KAT2A may be mutually exclusive. Ubiquitinated probably by WWP1 E3 ubiquitin ligase; ubiquitination is followed by protein degradation. Post-translationally, phosphorylated. As to expression, expressed in subsets of neurons of the adrenal medulla and dorsal root ganglion, inner nuclear and ganglion cell layers in the retina, the pineal and some regions of the brain.

It localises to the nucleus. Its function is as follows. DNA-binding transcriptional activator. Recognizes and binds to the consensus octamer binding site 5'-ATAATTAA-3' in promoter of target genes. Plays a fundamental role in the gene regulatory network essential for retinal ganglion cell (RGC) differentiation. Cooperates with the transcription factor POU4F2 to achieve maximal levels of expression of RGC target genes and RGC fate specification in the developing retina. Involved in the specification of motor neurons in cooperation with LHX3 and LDB1. Binds to insulin gene enhancer sequences. Essential for heart development. Marker of one progenitor cell population that give rise to the outflow tract, right ventricle, a subset of left ventricular cells, and a large number of atrial cells as well, its function is required for these progenitors to contribute to the heart. Controls the expression of FGF and BMP growth factors in this cell population and is required for proliferation and survival of cells within pharyngeal foregut endoderm and adjacent splanchnic mesoderm as well as for migration of cardiac progenitors into the heart. The sequence is that of Insulin gene enhancer protein ISL-1 (ISL1) from Homo sapiens (Human).